Reading from the N-terminus, the 78-residue chain is Putative membrane protein insertion efficiency factor (78 aa).

Belongs to the UPF0161 family.

It is found in the cell inner membrane. Its function is as follows. Could be involved in insertion of integral membrane proteins into the membrane. This is Putative membrane protein insertion efficiency factor from Roseobacter denitrificans (strain ATCC 33942 / OCh 114) (Erythrobacter sp. (strain OCh 114)).